A 259-amino-acid chain; its full sequence is EFDPRRDTLWLTGDLVARGPGSLEVLRYVKSLGDTVRLVLGNHDLHLLAVFAGISRNKPKDRLKPLLEAPDADELLNWLRRQPLLQVDEEKKLVMAHAGITPQWDLETAQQCARDVEAVLSSDSYPFFLDAMYGDMPNHWSNELSGLARLRFISNAFTRMRYCFPNGQLDMYSKEAPEDAPAPLKPWFAIPGPVSNAYSIAFGHWASLEGRGTPEGIYALDTGCCWGGELTCLRWEDKQYFTQPSNRQKSLDEGEAVAS.

The protein belongs to the Ap4A hydrolase family.

The catalysed reaction is P(1),P(4)-bis(5'-adenosyl) tetraphosphate + H2O = 2 ADP + 2 H(+). Its function is as follows. Hydrolyzes diadenosine 5',5'''-P1,P4-tetraphosphate to yield ADP. This is Bis(5'-nucleosyl)-tetraphosphatase, symmetrical (apaH) from Klebsiella aerogenes (Enterobacter aerogenes).